We begin with the raw amino-acid sequence, 801 residues long: Cadherin-20 (801 aa).

An N-terminal signal peptide occupies residues 1–34 (MWTSGRMSNAKNWLGLGMSLYFWGLMDLTTTVLS). A propeptide spanning residues 35–59 (DTPTPQGELEALLSDKPQSHQRTKR) is cleaved from the precursor. The Extracellular portion of the chain corresponds to 60-619 (SWVWNQFFVL…AYMLPVSLSR (560 aa)). 5 Cadherin domains span residues 61–165 (WVWN…EPKF), 166–274 (LDGP…PPRF), 275–389 (PQKH…PPVF), 390–494 (EPGF…APEF), and 494–610 (FPRF…SPEA). Asn-261 carries N-linked (GlcNAc...) asparagine glycosylation. Residues Asn-420, Asn-461, and Asn-542 are each glycosylated (N-linked (GlcNAc...) asparagine). The chain crosses the membrane as a helical span at residues 620-640 (GALIAILACIFVLLVLVLLIL). At 641 to 801 (SMRRHRKQPY…GASEGPAPLW (161 aa)) the chain is on the cytoplasmic side.

In terms of tissue distribution, expressed in placenta, adult brain, and fetal brain.

It localises to the cell membrane. Cadherins are calcium-dependent cell adhesion proteins. They preferentially interact with themselves in a homophilic manner in connecting cells; cadherins may thus contribute to the sorting of heterogeneous cell types. This is Cadherin-20 (CDH20) from Homo sapiens (Human).